A 498-amino-acid polypeptide reads, in one-letter code: Alpha-amylase A (498 aa).

A signal peptide spans 1–21 (MMVAWWSLFLYGLQVAAPALA). A disulfide bridge links cysteine 51 with cysteine 59. Glutamine 56 and tryptophan 104 together coordinate substrate. Asparagine 142 contacts Ca(2+). A substrate-binding site is contributed by histidine 143. Cysteine 171 and cysteine 185 are oxidised to a cystine. Glutamate 183 and aspartate 196 together coordinate Ca(2+). Asparagine 218 carries an N-linked (GlcNAc...) asparagine glycan. Arginine 225 lines the substrate pocket. Ca(2+) is bound by residues aspartate 227, histidine 231, and glutamate 251. Aspartate 227 (nucleophile) is an active-site residue. Position 230 to 231 (230 to 231 (KH)) interacts with substrate. The active-site Proton donor is the glutamate 251. A substrate-binding site is contributed by glycine 255. The cysteines at positions 261 and 304 are disulfide-linked. 2 residues coordinate substrate: aspartate 318 and arginine 365. Cysteine 461 and cysteine 496 form a disulfide bridge.

It belongs to the glycosyl hydrolase 13 family. Ca(2+) serves as cofactor.

The catalysed reaction is Endohydrolysis of (1-&gt;4)-alpha-D-glucosidic linkages in polysaccharides containing three or more (1-&gt;4)-alpha-linked D-glucose units.. This Aspergillus awamori (Black koji mold) protein is Alpha-amylase A (amyA).